The primary structure comprises 350 residues: Peroxidase 10 (350 aa).

An N-terminal signal peptide occupies residues 1–27 (MDHKMSMYLFVSYLAIFTLFFKGFVSS). Cystine bridges form between C57-C137, C90-C95, C143-C346, and C222-C256. The active-site Proton acceptor is H88. Positions 89, 92, 94, 96, and 98 each coordinate Ca(2+). Residue N102 is glycosylated (N-linked (GlcNAc...) asparagine). Residue P185 coordinates substrate. A glycan (N-linked (GlcNAc...) asparagine) is linked at N193. H215 contacts heme b. T216 serves as a coordination point for Ca(2+). Ca(2+) is bound by residues D270, S273, and D278.

It belongs to the peroxidase family. Classical plant (class III) peroxidase subfamily. Heme b is required as a cofactor. Ca(2+) serves as cofactor. As to expression, expressed in the whole plant, with the highest expression in roots.

It localises to the secreted. The catalysed reaction is 2 a phenolic donor + H2O2 = 2 a phenolic radical donor + 2 H2O. In terms of biological role, removal of H(2)O(2), oxidation of toxic reductants, biosynthesis and degradation of lignin, suberization, auxin catabolism, response to environmental stresses such as wounding, pathogen attack and oxidative stress. These functions might be dependent on each isozyme/isoform in each plant tissue. In Arabidopsis thaliana (Mouse-ear cress), this protein is Peroxidase 10 (PER10).